Here is a 707-residue protein sequence, read N- to C-terminus: Acetyl-coenzyme A synthetase 1 (707 aa).

CoA contacts are provided by residues 242 to 245 (RGGK) and threonine 361. Residues 437–439 (GEP), 461–466 (DTYWQT), aspartate 553, and arginine 568 each bind ATP. Residue serine 576 participates in CoA binding. Residue arginine 579 participates in ATP binding. Residue arginine 644 coordinates CoA. Positions 705–707 (VKL) match the Microbody targeting signal motif.

Belongs to the ATP-dependent AMP-binding enzyme family.

The protein localises to the microsome. It is found in the endoplasmic reticulum. The catalysed reaction is acetate + ATP + CoA = acetyl-CoA + AMP + diphosphate. May be required for assimilation of ethanol and acetate. In Kluyveromyces lactis (strain ATCC 8585 / CBS 2359 / DSM 70799 / NBRC 1267 / NRRL Y-1140 / WM37) (Yeast), this protein is Acetyl-coenzyme A synthetase 1 (ACS1).